We begin with the raw amino-acid sequence, 954 residues long: Endoplasmic reticulum aminopeptidase 2 (954 aa).

At 1-7 (MANSCRK) the chain is on the cytoplasmic side. Residues 8–28 (LIFNIYVVFYCSAVIMPQICI) form a helical; Signal-anchor for type II membrane protein membrane-spanning segment. The Lumenal segment spans residues 29 to 954 (CSQFTSSPID…TLRKWLLTSI (926 aa)). N-linked (GlcNAc...) asparagine glycans are attached at residues N79 and N113. Residues E194 and 328-332 (GAMEN) each bind substrate. H364 provides a ligand contact to Zn(2+). The Proton acceptor role is filled by E365. 2 residues coordinate Zn(2+): H368 and E387. The N-linked (GlcNAc...) asparagine glycan is linked to N399. C415 and C454 are disulfide-bonded. N644 carries N-linked (GlcNAc...) asparagine glycosylation. Cysteines 753 and 760 form a disulfide.

The protein belongs to the peptidase M1 family. In terms of assembly, heterodimer with ERAP1. Zn(2+) serves as cofactor. N-glycosylated.

It localises to the endoplasmic reticulum membrane. Aminopeptidase that plays a central role in peptide trimming, a step required for the generation of most HLA class I-binding peptides. Peptide trimming is essential to customize longer precursor peptides to fit them to the correct length required for presentation on MHC class I molecules. Preferentially hydrolyzes the basic residues Arg and Lys. The protein is Endoplasmic reticulum aminopeptidase 2 (ERAP2) of Bos taurus (Bovine).